A 255-amino-acid polypeptide reads, in one-letter code: 5'-nucleotidase SurE (255 aa).

4 residues coordinate a divalent metal cation: aspartate 8, aspartate 9, serine 40, and asparagine 93.

The protein belongs to the SurE nucleotidase family. A divalent metal cation is required as a cofactor.

The protein localises to the cytoplasm. The catalysed reaction is a ribonucleoside 5'-phosphate + H2O = a ribonucleoside + phosphate. Its function is as follows. Nucleotidase that shows phosphatase activity on nucleoside 5'-monophosphates. This chain is 5'-nucleotidase SurE, found in Rhodopseudomonas palustris (strain HaA2).